Consider the following 120-residue polypeptide: QVQLLQPGTELVKPGASVNLSCKASGYTFTSYWMHWIRQRPGQGLEWIGGINPSNGGTNYNEKFKSKATLTVDKSSSATYMQLSTPTSEDSAVYYCARWDYEGDRYFDVWGTGTTVTVSS.

The segment at 1-98 (QVQLLQPGTE…EDSAVYYCAR (98 aa)) is v segment. An intrachain disulfide couples Cys22 to Cys96. Positions 99 to 105 (WDYEGDR) are d segment. The interval 106 to 120 (YFDVWGTGTTVTVSS) is j segment.

In Mus musculus (Mouse), this protein is Ig heavy chain V region AC38 15.3.